We begin with the raw amino-acid sequence, 440 residues long: Transposon Ty1-JR2 Gag polyprotein (440 aa).

The segment covering 1 to 16 has biased composition (low complexity); that stretch reads MESQQLSQHSHISHGS. Disordered regions lie at residues 1–93, 126–173, and 352–440; these read MESQ…MMTQ, PQSQ…RPPP, and GSRN…PETY. Polar residues-rich tracts occupy residues 48 to 60, 71 to 93, and 127 to 152; these read TKANSQQTTTPAS, SPQTAQSHSPQNGPYPQQCMMTQ, and QSQFPQYPSSVGTPLSTPSPESGNTF. Residues 153–165 show a composition bias toward low complexity; that stretch reads TDSSSADSDMTST. Residues 299-401 form an RNA-binding region; it reads NNGIHINNKV…NSKSKTARAH (103 aa). The span at 402 to 418 shows a compositional bias: low complexity; the sequence is NVSTSNNSPSTDNDSIS. Serine 416 bears the Phosphoserine mark. Residues 419-428 show a composition bias toward polar residues; that stretch reads KSTTEPIQLN. The segment covering 429-440 has biased composition (basic and acidic residues); that stretch reads NKHDLHLRPETY.

Homotrimer.

Its subcellular location is the cytoplasm. Functionally, capsid protein (CA) is the structural component of the virus-like particle (VLP), forming the shell that encapsulates the retrotransposons dimeric RNA genome. The particles are assembled from trimer-clustered units and there are holes in the capsid shells that allow for the diffusion of macromolecules. CA also has nucleocapsid-like chaperone activity, promoting primer tRNA(i)-Met annealing to the multipartite primer-binding site (PBS), dimerization of Ty1 RNA and initiation of reverse transcription. This Saccharomyces cerevisiae (strain ATCC 204508 / S288c) (Baker's yeast) protein is Transposon Ty1-JR2 Gag polyprotein (TY1A-JR2).